The chain runs to 1720 residues: TOG array regulator of axonemal microtubules protein 1 (1720 aa).

TOG stretches follow at residues 94–312 and 352–596; these read EEDT…RRLE and PQEL…MPSS. HEAT repeat units lie at residues 175-212, 214-247, 251-289, 345-384, 390-427, 431-466, 467-504, and 506-543; these read AFSL…RSPG, VLRT…TEDL, LDLT…RLGQ, NLKF…KFNP, SSLV…RLGE, QFLG…MKEV, GPQQ…YPSE, and FDLP…SMGS. Polar residues-rich tracts occupy residues 794-809, 819-829, 842-852, and 868-877; these read FGSQ…QNPS, PVSSPRTSPKH, DNSVNFSNSWP, and LVSQKSSDPT. Disordered stretches follow at residues 794–924, 970–998, and 1067–1087; these read FGSQ…SLLP, HSSL…ESPD, and KKIS…NPQQ. Polar residues predominate over residues 1073-1087; that stretch reads AEQSPSAGSSSNPQQ. Residues 1256 to 1425 are TOG 3; the sequence is EIALTEALRL…YIKDSVRNLQ (170 aa). 2 HEAT repeats span residues 1294-1331 and 1335-1372; these read TKLH…YLKK and QELD…NVTP. The tract at residues 1430-1462 is disordered; sequence GEIPLDTPSAKGRRSHTGSVGNTRSSSVSRDAF. Residues 1446 to 1458 show a composition bias toward polar residues; it reads TGSVGNTRSSSVS. The TOG 4 stretch occupies residues 1484 to 1720; sequence SLESAEYLKL…LLDMTILNEL (237 aa). HEAT repeat units lie at residues 1485 to 1522, 1526 to 1563, and 1567 to 1605; these read LESA…NNQD, GNIV…LLRD, and PIIN…HVDN.

The protein belongs to the Crescerin family. In terms of assembly, interacts with ARMC9, CCDC66, CEP104 and CSPP1.

It is found in the cell projection. Its subcellular location is the cilium. It localises to the cytoplasm. The protein resides in the cytoskeleton. The protein localises to the cilium axoneme. Involved in ciliogenesis. It is required for appropriate acetylation and polyglutamylation of ciliary microtubules, and regulation of cilium length. Interacts with microtubules and promotes microtubule polymerization via its HEAT repeat domains, especially those in TOG region 2 and 4. The polypeptide is TOG array regulator of axonemal microtubules protein 1 (Homo sapiens (Human)).